The chain runs to 593 residues: F-box/LRR-repeat protein 17 (593 aa).

The region spanning 120-177 (DLDLQLDTDIVQPGRFHAVGLWEVLKRLPPSSLLMAARVCKGWRETSRKMWKAAEELR) is the F-box domain. 9 LRR repeats span residues 178-206 (IRVP…SLKI), 207-232 (ESDF…EITT), 237-262 (VNRI…KMEG), 276-304 (LSTL…SLEF), 335-361 (SLKL…SLVL), 362-387 (GINI…DLSG), 414-439 (CPNI…DCGM), 477-502 (LSLW…NLNL), and 503-525 (CSNL…YASG).

As to quaternary structure, part of a SCF (ASK-cullin-F-box) protein ligase complex. Interacts with SKP1A/ASK1, KRP4, KRP6 and KRP7. Expressed in developing pollen.

It localises to the nucleus. It functions in the pathway protein modification; protein ubiquitination. Its function is as follows. Essential protein for male fertility. Component of the SCF(ASK-cullin-F-box) E3 ubiquitin ligase complex SCF(FBL17), which mediates the ubiquitination and subsequent proteasomal degradation of target proteins. Enables the switch in cell cycle control leading to male germ cell lineage formation from microspores after meiosis. Targets CDKA-1 inhibitors the degradation specifically in male germ cells (e.g. KRP6 and KRP7) and thus enables CDKA-1 activation and germ cell S-phase progression. Promotes twin sperm cell production and double fertilization. The chain is F-box/LRR-repeat protein 17 (FBL17) from Arabidopsis thaliana (Mouse-ear cress).